Reading from the N-terminus, the 369-residue chain is Outer membrane porin F (369 aa).

The first 21 residues, 1–21 (MKRNILAVVIPALLVAGTANA), serve as a signal peptide directing secretion. Residues 22-27 (AEIFNK) form a beta stranded membrane-spanning segment. A topological domain (periplasmic) is located at residue Asp28. A beta stranded membrane pass occupies residues 29–44 (GNKLDLYGKVDVRHQF). Topologically, residues 45–55 (ADKRSSEDGDD) are extracellular. The beta stranded transmembrane segment at 56-68 (SYARIGIKGETQI) threads the bilayer. Topologically, residues 69–70 (SD) are periplasmic. A beta stranded membrane pass occupies residues 71 to 83 (QLTGFGRWEYNVK). Over 84–97 (AKGTEAAVAESSTR) the chain is Extracellular. Residues 98 to 106 (LAFAGLKFA) traverse the membrane as a beta stranded segment. Residues 107-108 (NY) lie on the Periplasmic side of the membrane. Residues 109–115 (GSLDYGR) traverse the membrane as a beta stranded segment. Residues 116–150 (NYGVNYDVNAWTDVLPIFGGDAMAQTDNFMTGRST) lie on the Extracellular side of the membrane. A beta stranded transmembrane segment spans residues 151-157 (GLLTYRN). Over 158 to 165 (TDFFGLVD) the chain is Periplasmic. The beta stranded transmembrane segment at 166–177 (GLNFALQYQGQN) threads the bilayer. The Extracellular portion of the chain corresponds to 178–193 (SDRTKNKGRDTERSNG). A beta stranded transmembrane segment spans residues 194–204 (DGYGLSSTYDV). At 205 to 206 (GY) the chain is on the periplasmic side. Residues 207 to 219 (GITVGGSYANSAR) form a beta stranded membrane-spanning segment. Residues 220–234 (TADQKEKVSDAYGKR) are Extracellular-facing. A beta stranded transmembrane segment spans residues 235–246 (AEAWNIGAKYDA). Residue Asn247 is a topological domain, periplasmic. Residues 248-259 (NVYLAAMYGETR) form a beta stranded membrane-spanning segment. Topologically, residues 260–278 (NMTRYTRTIADTDATLIAN) are extracellular. Residues 279 to 291 (KTQNIELTAQYLF) form a beta stranded membrane-spanning segment. The Periplasmic segment spans residues 292–294 (SDL). The beta stranded transmembrane segment at 295–308 (GLKPSLAYVQSKGK) threads the bilayer. Topologically, residues 309–320 (DLTEGKGFNGDL) are extracellular. A beta stranded transmembrane segment spans residues 321 to 332 (VKYVSVGTYYYF). Residues 333 to 334 (NK) lie on the Periplasmic side of the membrane. The beta stranded transmembrane segment at 335–344 (NLSTYVDYKI) threads the bilayer. The Extracellular portion of the chain corresponds to 345-359 (NLLKKDNELGVNARN). A beta stranded membrane pass occupies residues 360 to 369 (VFGVGLTYQF).

Belongs to the Gram-negative porin family. As to quaternary structure, homotrimer.

It localises to the cell outer membrane. Forms pores that allow passive diffusion of small molecules across the outer membrane. The polypeptide is Outer membrane porin F (ompF) (Xenorhabdus nematophila (strain ATCC 19061 / DSM 3370 / CCUG 14189 / LMG 1036 / NCIMB 9965 / AN6)).